The primary structure comprises 68 residues: Protein transport protein Sec61 subunit gamma (68 aa).

At methionine 1 the chain carries N-acetylmethionine. At 1-32 (MDQVMQFVEPSRQFVKDSIRLVKRCTKPDRKE) the chain is on the cytoplasmic side. Serine 18 is modified (phosphoserine). A helical transmembrane segment spans residues 33–61 (FQKIAMATAIGFAIMGFIGFFVKLIHIPI). Over 62 to 68 (NNIIVGG) the chain is Extracellular.

It belongs to the SecE/SEC61-gamma family. In terms of assembly, the SEC61 channel-forming translocon complex consists of channel-forming core components SEC61A1, SEC61B and SEC61G and different auxiliary components such as SEC62 and SEC63. The SEC61 channel associates with the multi-pass translocon (MPT) complex.

Its subcellular location is the endoplasmic reticulum membrane. Functionally, component of SEC61 channel-forming translocon complex that mediates transport of signal peptide-containing precursor polypeptides across the endoplasmic reticulum (ER). Forms a ribosome receptor and a gated pore in the ER membrane, both functions required for cotranslational translocation of nascent polypeptides. The SEC61 channel is also involved in ER membrane insertion of transmembrane proteins: it mediates membrane insertion of the first few transmembrane segments of proteins, while insertion of subsequent transmembrane regions of multi-pass membrane proteins is mediated by the multi-pass translocon (MPT) complex. The SEC61 channel cooperates with the translocating protein TRAM1 to import nascent proteins into the ER. This Bos taurus (Bovine) protein is Protein transport protein Sec61 subunit gamma (SEC61G).